The following is a 747-amino-acid chain: Protein Niban 2 (747 aa).

A lipid anchor (N-myristoyl glycine) is attached at Gly-2. The 125-residue stretch at 68–192 (RIIFSGNLFQ…WQAVLQDCVR (125 aa)) folds into the PH domain. Phosphoserine occurs at positions 568 and 574. The segment at 589–747 (WGEQYGDGGD…EDSAGVQTEF (159 aa)) is disordered. Residues 593–602 (YGDGGDGSDS) show a composition bias toward gly residues. Residues Ser-605, Ser-626, Ser-641, Ser-645, Ser-648, Ser-667, Ser-672, Ser-683, Ser-693, and Ser-697 each carry the phosphoserine modification. A compositionally biased stretch (basic and acidic residues) spans 708–722 (VDLEPPKPSDQETGE). Positions 734–747 (HTTTEDSAGVQTEF) are enriched in polar residues.

The protein belongs to the Niban family. As apoptosis proceeds, degraded via an proteasome-independent pathway, probably by caspases.

It is found in the cytoplasm. The protein resides in the cytosol. It localises to the cell junction. The protein localises to the adherens junction. Its subcellular location is the membrane. In terms of biological role, may play a role in apoptosis suppression. The polypeptide is Protein Niban 2 (Rattus norvegicus (Rat)).